Here is a 389-residue protein sequence, read N- to C-terminus: Leucine aminopeptidase 1 (389 aa).

An N-terminal signal peptide occupies residues 1–18 (MKSSVLLSLCTAALVAGA). Positions 19–89 (AHPLEPQVVL…INANRLIEKS (71 aa)) are excised as a propeptide. N-linked (GlcNAc...) asparagine glycans are attached at residues Asn99, Asn156, and Asn180. The Zn(2+) site is built by His188, Asp207, Glu246, and Asp273. A disulfide bridge connects residues Cys322 and Cys326. Residue His355 coordinates Zn(2+).

This sequence belongs to the peptidase M28 family. M28E subfamily. As to quaternary structure, monomer. The cofactor is Zn(2+).

The protein resides in the secreted. Extracellular aminopeptidase that allows assimilation of proteinaceous substrates. The polypeptide is Leucine aminopeptidase 1 (LAP1) (Phaeosphaeria nodorum (strain SN15 / ATCC MYA-4574 / FGSC 10173) (Glume blotch fungus)).